The chain runs to 541 residues: Chaperonin GroEL 2 (541 aa).

Residues 30 to 33, lysine 51, 87 to 91, glycine 414, and aspartate 495 contribute to the ATP site; these read TLGP and DGTTT.

This sequence belongs to the chaperonin (HSP60) family. In terms of assembly, forms a cylinder of 14 subunits composed of two heptameric rings stacked back-to-back. Interacts with the co-chaperonin GroES.

The protein localises to the cytoplasm. The catalysed reaction is ATP + H2O + a folded polypeptide = ADP + phosphate + an unfolded polypeptide.. Functionally, together with its co-chaperonin GroES, plays an essential role in assisting protein folding. The GroEL-GroES system forms a nano-cage that allows encapsulation of the non-native substrate proteins and provides a physical environment optimized to promote and accelerate protein folding. The polypeptide is Chaperonin GroEL 2 (Cereibacter sphaeroides (Rhodobacter sphaeroides)).